The following is a 1593-amino-acid chain: Nischarin (1593 aa).

The tract at residues 1–134 (MAAATLSFGP…GVTAALAEEL (134 aa)) is necessary for binding to phosphoinositide-3-P; not sufficient for targeting to endosomes. Positions 12 to 122 (REAEPAKEAR…AHFLHFHLYE (111 aa)) constitute a PX domain. The necessary for homooligomerization and targeting to endosomes stretch occupies residues 121–695 (YEVNGVTAAL…ERLALEWALG (575 aa)). An interaction with PAK1 region spans residues 246 to 869 (MSVRFSATSM…LVYSDKRMVQ (624 aa)). LRR repeat units lie at residues 290–311 (ALTT…VKLI), 313–334 (KIEY…QHLY), 335–356 (NLVH…HTKL), 358–379 (NVKT…HKLY), 380–401 (SLVN…KSIG), and 405–426 (CLER…RTKV). Basic and acidic residues predominate over residues 466–480 (SKLSNTEKKAGEDFR). The disordered stretch occupies residues 466 to 499 (SKLSNTEKKAGEDFRLPPAPCIRPGGSPPAAPAS). Positions 482 to 496 (PPAPCIRPGGSPPAA) are enriched in pro residues. Phosphoserine occurs at positions 543, 545, and 548. A coiled-coil region spans residues 624 to 694 (IEAANQREEA…EERLALEWAL (71 aa)). Positions 629–687 (QREEAHGEQGEEEEEEEEEEDVAENRYFEMGPPDAEEEEGSGQGEEDEEDEDEEAEEER) are disordered. Composition is skewed to acidic residues over residues 638-650 (GEEE…EEDV) and 662-685 (DAEE…EAEE). Residues 661–869 (PDAEEEEGSG…LVYSDKRMVQ (209 aa)) are interaction with LIMK. Residues 709–807 (KVLWCFLIHV…ANLHEFHADL (99 aa)) form an interaction with ITGA5 region. The tract at residues 1016–1185 (NPSAKPRNQP…PAGGPAPAEA (170 aa)) is disordered. 2 stretches are compositionally biased toward low complexity: residues 1038–1069 (ETPA…LAPV) and 1081–1158 (AEAP…APAP). A run of 10 repeats spans residues 1081–1086 (AEAPAA), 1087–1092 (AEAPAA), 1093–1098 (AEAPAA), 1099–1104 (AEAPAA), 1105–1110 (AEAPAA), 1111–1116 (AEAPAA), 1123–1128 (AEAPAA), 1129–1134 (AEAPAA), 1135–1140 (AEAPAA), and 1141–1146 (AEAPAA). Positions 1081–1146 (AEAPAAAEAP…APAAAEAPAA (66 aa)) are 10 X 6 AA tandem repeat of A-E-A-P-A-A. Positions 1159–1179 (NQAPAPARGPAPARGPAPAGG) are enriched in pro residues. Threonine 1371 is modified (phosphothreonine). A Phosphoserine modification is found at serine 1373.

Homooligomer. Interacts with GRB2. Interacts with PIK3R1; probably associates with the PI3-kinase complex. Interacts with IRS4. Found in a complex with ITGA5 and PAK1. Found in a complex with LIMK1 and PAK1. Interacts with ITGA5 (via cytoplasmic domain); this interaction is direct. Interacts with PAK1 (via kinase domain); this interaction is direct and is increased upon activation of PAK1. Interacts with LIMK1 (via PDZ and kinase domain); this interaction is direct. Interacts with LIMK2; this interaction depends on LIMK2 activity. Interacts with RAC1 (activated state). Interacts with STK11; this interaction may increase STK11 activity. In terms of tissue distribution, highly expressed in brain and kidney. Moderately expressed in heart, liver, lung and skeletal muscle. Not detected in spleen and testis.

Its subcellular location is the cell membrane. It is found in the cytoplasm. The protein localises to the early endosome. It localises to the recycling endosome. Its function is as follows. Acts either as the functional imidazoline-1 receptor (I1R) candidate or as a membrane-associated mediator of the I1R signaling. Binds numerous imidazoline ligands that induces initiation of cell-signaling cascades triggering to cell survival, growth and migration. Its activation by the agonist rilmenidine induces an increase in phosphorylation of mitogen-activated protein kinases MAPK1 and MAPK3 in rostral ventrolateral medulla (RVLM) neurons that exhibited rilmenidine-evoked hypotension. Blocking its activation with efaroxan abolished rilmenidine-induced mitogen-activated protein kinase phosphorylation in RVLM neurons. Acts as a modulator of Rac-regulated signal transduction pathways. Suppresses Rac1-stimulated cell migration by interacting with PAK1 and inhibiting its kinase activity. Also blocks Pak-independent Rac signaling by interacting with RAC1 and inhibiting Rac1-stimulated NF-kB response element and cyclin D1 promoter activation. Also inhibits LIMK1 kinase activity by reducing LIMK1 'Tyr-508' phosphorylation. Inhibits Rac-induced cell migration and invasion in breast and colon epithelial cells. Inhibits lamellipodia formation, when overexpressed. Plays a role in protection against apoptosis. Involved in association with IRS4 in the enhancement of insulin activation of MAPK1 and MAPK3. When overexpressed, induces a redistribution of cell surface ITGA5 integrin to intracellular endosomal structures. The chain is Nischarin (Nisch) from Mus musculus (Mouse).